We begin with the raw amino-acid sequence, 347 residues long: Protein pelota homolog (347 aa).

It belongs to the eukaryotic release factor 1 family. Pelota subfamily. Monomer. The cofactor is a divalent metal cation.

The protein resides in the cytoplasm. In terms of biological role, may function in recognizing stalled ribosomes, interact with stem-loop structures in stalled mRNA molecules, and effect endonucleolytic cleavage of the mRNA. May play a role in the release non-functional ribosomes and degradation of damaged mRNAs. Has endoribonuclease activity. This is Protein pelota homolog from Methanococcoides burtonii (strain DSM 6242 / NBRC 107633 / OCM 468 / ACE-M).